The following is a 338-amino-acid chain: Phenylalanine--tRNA ligase alpha subunit (338 aa).

Glu-252 contacts Mg(2+).

This sequence belongs to the class-II aminoacyl-tRNA synthetase family. Phe-tRNA synthetase alpha subunit type 1 subfamily. Tetramer of two alpha and two beta subunits. Requires Mg(2+) as cofactor.

Its subcellular location is the cytoplasm. The enzyme catalyses tRNA(Phe) + L-phenylalanine + ATP = L-phenylalanyl-tRNA(Phe) + AMP + diphosphate + H(+). The chain is Phenylalanine--tRNA ligase alpha subunit from Fusobacterium nucleatum subsp. nucleatum (strain ATCC 25586 / DSM 15643 / BCRC 10681 / CIP 101130 / JCM 8532 / KCTC 2640 / LMG 13131 / VPI 4355).